Reading from the N-terminus, the 258-residue chain is MKKTATPKLRLLLSNDDGVYAKGLAILAKTLADLGEVDVVAPDRNRSGASNSLTLNAPLHIKNLENGMISVEGTPTDCVHLAITGVLPEMPDMVVAGINAGPNLGDDVWYSGTVAAAMEGRFLGLPALAVSLGGELFRYYETAAKVVYQLIQRIEKDPLPPSTILNINVPDLPYEELKGFEVTRLGTRHRAEPTIRQIDPRGHPIYWVGAAGPEQDSGPGTDFFAMNHHCVSITPLRVDLTHYEAFDQLASWVKRLEM.

A divalent metal cation is bound by residues aspartate 16, aspartate 17, serine 47, and asparagine 99.

Belongs to the SurE nucleotidase family. A divalent metal cation serves as cofactor.

Its subcellular location is the cytoplasm. The catalysed reaction is a ribonucleoside 5'-phosphate + H2O = a ribonucleoside + phosphate. In terms of biological role, nucleotidase that shows phosphatase activity on nucleoside 5'-monophosphates. The polypeptide is 5'-nucleotidase SurE (Coxiella burnetii (strain CbuK_Q154) (Coxiella burnetii (strain Q154))).